Consider the following 410-residue polypeptide: 3-phosphoshikimate 1-carboxyvinyltransferase (410 aa).

3 residues coordinate 3-phosphoshikimate: K21, S22, and R26. K21 provides a ligand contact to phosphoenolpyruvate. Phosphoenolpyruvate is bound by residues G69 and R97. Positions 143, 144, 145, 171, 288, and 315 each coordinate 3-phosphoshikimate. Q145 is a binding site for phosphoenolpyruvate. The Proton acceptor role is filled by D288. 3 residues coordinate phosphoenolpyruvate: R319, R364, and K389.

The protein belongs to the EPSP synthase family. As to quaternary structure, monomer.

It is found in the cytoplasm. The enzyme catalyses 3-phosphoshikimate + phosphoenolpyruvate = 5-O-(1-carboxyvinyl)-3-phosphoshikimate + phosphate. It functions in the pathway metabolic intermediate biosynthesis; chorismate biosynthesis; chorismate from D-erythrose 4-phosphate and phosphoenolpyruvate: step 6/7. In terms of biological role, catalyzes the transfer of the enolpyruvyl moiety of phosphoenolpyruvate (PEP) to the 5-hydroxyl of shikimate-3-phosphate (S3P) to produce enolpyruvyl shikimate-3-phosphate and inorganic phosphate. The sequence is that of 3-phosphoshikimate 1-carboxyvinyltransferase from Bacteroides fragilis (strain YCH46).